A 481-amino-acid polypeptide reads, in one-letter code: Keratin, type I cytoskeletal 39 (481 aa).

The interval 1-25 (MDTKGSTVTISSSTPPQNCSGNTNV) is disordered. Residues 1–90 (MDTKGSTVTI…RCSDGINSHE (90 aa)) are head. The 312-residue stretch at 90–401 (EKETMQILNE…SLLESLDGRL (312 aa)) folds into the IF rod domain. Positions 91–125 (KETMQILNERLASYLEKVRMLEGENADLEDKIQEE) are coil 1A. Positions 126-136 (CSKTLPILCPD) are linker 1. A coil 1B region spans residues 137–237 (YLSYYTTIEQ…HEEEINSLQC (101 aa)). The linker 12 stretch occupies residues 238-253 (QLGDRINIEVTAAPSV). The tract at residues 254–397 (DLNQILQKMR…ATYRSLLESL (144 aa)) is coil 2. The interval 398 to 481 (DGRLPCNPCT…PCYITRPAKV (84 aa)) is tail.

This sequence belongs to the intermediate filament family. As to quaternary structure, heterotetramer of two type I and two type II keratins.

Functionally, may play a role in late hair differentiation. In Rattus norvegicus (Rat), this protein is Keratin, type I cytoskeletal 39 (Krt39).